The primary structure comprises 79 residues: Small ribosomal subunit protein bS21 (79 aa).

Composition is skewed to basic residues over residues 47 to 59 (RKQA…HLKK) and 69 to 79 (GVGHRRKKSTT). The interval 47 to 79 (RKQAAAVKRHLKKISRDVSSRRGVGHRRKKSTT) is disordered.

This sequence belongs to the bacterial ribosomal protein bS21 family.

The chain is Small ribosomal subunit protein bS21 from Legionella pneumophila (strain Paris).